Reading from the N-terminus, the 54-residue chain is UPF0391 membrane protein TERTU_3637 (54 aa).

2 helical membrane passes run 4–24 and 29–49; these read WALVFLIFALVAGVLGFTGLA and SIAWILFVVGLIVSLIFLVAG.

The protein belongs to the UPF0391 family.

It is found in the cell membrane. The sequence is that of UPF0391 membrane protein TERTU_3637 from Teredinibacter turnerae (strain ATCC 39867 / T7901).